A 117-amino-acid chain; its full sequence is Large ribosomal subunit protein uL22c (117 aa).

The protein belongs to the universal ribosomal protein uL22 family. In terms of assembly, part of the 50S ribosomal subunit.

It localises to the plastid. Its subcellular location is the chloroplast. In terms of biological role, this protein binds specifically to 23S rRNA. The globular domain of the protein is located near the polypeptide exit tunnel on the outside of the subunit, while an extended beta-hairpin is found that lines the wall of the exit tunnel in the center of the 70S ribosome. The sequence is that of Large ribosomal subunit protein uL22c (rpl22) from Pyropia yezoensis (Susabi-nori).